The sequence spans 375 residues: N5-carboxyaminoimidazole ribonucleotide synthase (375 aa).

ATP contacts are provided by residues arginine 108, lysine 148, 153–159, 183–186, glutamate 191, histidine 214, and 266–267; these read GYDGKGQ, EQYL, and NE. In terms of domain architecture, ATP-grasp spans 112 to 296; that stretch reads KQTLLEANTQ…QFDTHILAIT (185 aa).

This sequence belongs to the PurK/PurT family. As to quaternary structure, homodimer.

It catalyses the reaction 5-amino-1-(5-phospho-beta-D-ribosyl)imidazole + hydrogencarbonate + ATP = 5-carboxyamino-1-(5-phospho-D-ribosyl)imidazole + ADP + phosphate + 2 H(+). It functions in the pathway purine metabolism; IMP biosynthesis via de novo pathway; 5-amino-1-(5-phospho-D-ribosyl)imidazole-4-carboxylate from 5-amino-1-(5-phospho-D-ribosyl)imidazole (N5-CAIR route): step 1/2. Its function is as follows. Catalyzes the ATP-dependent conversion of 5-aminoimidazole ribonucleotide (AIR) and HCO(3)(-) to N5-carboxyaminoimidazole ribonucleotide (N5-CAIR). This Staphylococcus epidermidis (strain ATCC 12228 / FDA PCI 1200) protein is N5-carboxyaminoimidazole ribonucleotide synthase.